The chain runs to 160 residues: Large ribosomal subunit protein uL22c (160 aa).

It belongs to the universal ribosomal protein uL22 family. In terms of assembly, part of the 50S ribosomal subunit.

Its subcellular location is the plastid. The protein resides in the chloroplast. In terms of biological role, this protein binds specifically to 23S rRNA. Functionally, the globular domain of the protein is located near the polypeptide exit tunnel on the outside of the subunit, while an extended beta-hairpin is found that lines the wall of the exit tunnel in the center of the 70S ribosome. This Aethionema grandiflorum (Persian stone-cress) protein is Large ribosomal subunit protein uL22c (rpl22).